Here is a 215-residue protein sequence, read N- to C-terminus: Probable GTP-binding protein EngB (215 aa).

Positions 30–204 constitute an EngB-type G domain; the sequence is TGIEVAFAGR…RQKLDTWFSE (175 aa). Residues 38-45, 65-69, 83-86, 150-153, and 183-185 contribute to the GTP site; these read GRSNAGKS, GRTQL, DLPG, TKAD, and FSS. Ser45 and Thr67 together coordinate Mg(2+).

This sequence belongs to the TRAFAC class TrmE-Era-EngA-EngB-Septin-like GTPase superfamily. EngB GTPase family. Mg(2+) serves as cofactor.

Necessary for normal cell division and for the maintenance of normal septation. In Escherichia coli O1:K1 / APEC, this protein is Probable GTP-binding protein EngB.